Consider the following 488-residue polypeptide: ATP synthase subunit beta (488 aa).

164–171 serves as a coordination point for ATP; sequence GGAGVGKT.

It belongs to the ATPase alpha/beta chains family. In terms of assembly, F-type ATPases have 2 components, CF(1) - the catalytic core - and CF(0) - the membrane proton channel. CF(1) has five subunits: alpha(3), beta(3), gamma(1), delta(1), epsilon(1). CF(0) has four main subunits: a(1), b(1), b'(1) and c(9-12).

It is found in the cellular thylakoid membrane. The catalysed reaction is ATP + H2O + 4 H(+)(in) = ADP + phosphate + 5 H(+)(out). In terms of biological role, produces ATP from ADP in the presence of a proton gradient across the membrane. The catalytic sites are hosted primarily by the beta subunits. This is ATP synthase subunit beta from Prochlorococcus marinus (strain NATL2A).